A 311-amino-acid chain; its full sequence is tRNA-cytidine(32) 2-sulfurtransferase (311 aa).

The PP-loop motif signature appears at 47–52 (SGGKDS). [4Fe-4S] cluster contacts are provided by C122, C125, and C213.

It belongs to the TtcA family. As to quaternary structure, homodimer. The cofactor is Mg(2+). Requires [4Fe-4S] cluster as cofactor.

The protein resides in the cytoplasm. The enzyme catalyses cytidine(32) in tRNA + S-sulfanyl-L-cysteinyl-[cysteine desulfurase] + AH2 + ATP = 2-thiocytidine(32) in tRNA + L-cysteinyl-[cysteine desulfurase] + A + AMP + diphosphate + H(+). It participates in tRNA modification. Functionally, catalyzes the ATP-dependent 2-thiolation of cytidine in position 32 of tRNA, to form 2-thiocytidine (s(2)C32). The sulfur atoms are provided by the cysteine/cysteine desulfurase (IscS) system. This Salmonella arizonae (strain ATCC BAA-731 / CDC346-86 / RSK2980) protein is tRNA-cytidine(32) 2-sulfurtransferase.